A 227-amino-acid chain; its full sequence is Phage shock protein A homolog (227 aa).

Positions 33–125 form a coiled coil; the sequence is LRNMNSDLAK…AQMRKMHDKL (93 aa). The segment at 191–211 is disordered; the sequence is SAPQDDMADLSAKYDTGGSSQ.

Belongs to the PspA/Vipp/IM30 family.

The polypeptide is Phage shock protein A homolog (ydjF) (Bacillus subtilis (strain 168)).